The following is a 175-amino-acid chain: Viral interleukin-10 homolog (175 aa).

An N-terminal signal peptide occupies residues 1–19 (MLSVMVSSSLVLIVFFLGA). Intrachain disulfides connect Cys-37/Cys-127 and Cys-81/Cys-132. Asn-151 carries N-linked (GlcNAc...) asparagine; by host glycosylation.

The protein belongs to the IL-10 family. As to quaternary structure, homodimer; disulfide-linked.

It is found in the secreted. Its function is as follows. Functional viral IL-10 homolog. Can bind to the human IL-10 receptor and compete with human IL-10 for binding sites. Requires both subunits of the human IL-10 receptor complex to induce signal transduction events and biological activities. IL-10 signaling pathway has several immunosuppressive activities that are exploited by the virus. Inhibits TLR-induced type I interferon production in host plasmacytoid dendritic cells. In Human cytomegalovirus (strain AD169) (HHV-5), this protein is Viral interleukin-10 homolog (UL111A).